We begin with the raw amino-acid sequence, 385 residues long: UPF0496 protein At3g28290 (385 aa).

Residues 138-214 (KDKENDVGKK…IEMEISSRKK (77 aa)) adopt a coiled-coil conformation. 2 helical membrane-spanning segments follow: residues 217 to 237 (IISNVLFIGAFVAVAVGSMVL) and 242 to 262 (VGAGVGVAGLLSLPLIAIGWV). Positions 267-294 (ILENKIQAREKQEEALKKAHRIANEMDK) form a coiled coil.

The protein belongs to the UPF0496 family. Widely expressed.

It is found in the membrane. The sequence is that of UPF0496 protein At3g28290 from Arabidopsis thaliana (Mouse-ear cress).